A 38-amino-acid polypeptide reads, in one-letter code: Large ribosomal subunit protein bL36 (38 aa).

Belongs to the bacterial ribosomal protein bL36 family.

The protein is Large ribosomal subunit protein bL36 of Pseudothermotoga lettingae (strain ATCC BAA-301 / DSM 14385 / NBRC 107922 / TMO) (Thermotoga lettingae).